The primary structure comprises 481 residues: UDP-N-acetylmuramoyl-L-alanyl-D-glutamate--L-lysine ligase (481 aa).

A UDP-N-acetyl-alpha-D-muramoyl-L-alanyl-D-glutamate-binding site is contributed by S42. Position 118–124 (118–124 (GTKGKTT)) interacts with ATP. UDP-N-acetyl-alpha-D-muramoyl-L-alanyl-D-glutamate is bound by residues Q158, 160-161 (TT), S187, and R195. Position 229 is an N6-carboxylysine (K229). An L-lysine recognition motif motif is present at residues 404 to 407 (DDPN).

This sequence belongs to the MurCDEF family. MurE subfamily. In terms of processing, carboxylation is probably crucial for Mg(2+) binding and, consequently, for the gamma-phosphate positioning of ATP.

The protein resides in the cytoplasm. The enzyme catalyses UDP-N-acetyl-alpha-D-muramoyl-L-alanyl-D-glutamate + L-lysine + ATP = UDP-N-acetyl-alpha-D-muramoyl-L-alanyl-gamma-D-glutamyl-L-lysine + ADP + phosphate + H(+). It participates in cell wall biogenesis; peptidoglycan biosynthesis. Its function is as follows. Catalyzes the addition of L-lysine to the nucleotide precursor UDP-N-acetylmuramoyl-L-alanyl-D-glutamate (UMAG) in the biosynthesis of bacterial cell-wall peptidoglycan. This Streptococcus pyogenes serotype M28 (strain MGAS6180) protein is UDP-N-acetylmuramoyl-L-alanyl-D-glutamate--L-lysine ligase.